The following is an 80-amino-acid chain: Small ribosomal subunit protein uS17 (80 aa).

The protein belongs to the universal ribosomal protein uS17 family. In terms of assembly, part of the 30S ribosomal subunit.

Its function is as follows. One of the primary rRNA binding proteins, it binds specifically to the 5'-end of 16S ribosomal RNA. In Brucella suis (strain ATCC 23445 / NCTC 10510), this protein is Small ribosomal subunit protein uS17.